Consider the following 438-residue polypeptide: MEGAGGKPTAVVAVVTEPRFTQRYREYLEKHKLLDRQHRVKKLRDGTVALPVLREALLEQHLRELRNRVAPGSTCVPTQLLDPVPSKKAQSYSPAQRLCLEVSRWVEGRGVTWSAKLEADLPRSWQRHGDLLLLSEDCFQAKQWRHLEPELWETVASALGAQRLAKRGRVSPDSTRTPAVSLLLGDHGWVEHVDNGIRYKFDVTQCMFSFGNITEKLRVASLPCVGEVLVDLYAGIGYFTLPFLVHAEAAFVHACEWNPHAVVALRNNLELNGVADRCQIHFGDNRKLKLSNVADRVNLGLIPSSEEGWPIACRVLKQDAGGILHIHQNVESFPGKTLQPPGSSEMEEHWPSPHQIISNQLNNGATSDSRRKTLSVATKPEWQRWAKAAETRIATLLHQVHGKRWKTQILHIQPVKSYAPHVDHIVLDLECRPCHLVG.

S-adenosyl-L-methionine is bound by residues serine 209, lysine 216, glutamate 256, and 284–285 (DN).

The protein belongs to the class I-like SAM-binding methyltransferase superfamily. TRM5/TYW2 family.

The enzyme catalyses 4-demethylwyosine(37) in tRNA(Phe) + S-adenosyl-L-methionine = 4-demethyl-7-[(3S)-3-amino-3-carboxypropyl]wyosine(37) in tRNA(Phe) + S-methyl-5'-thioadenosine + H(+). The protein operates within tRNA modification; wybutosine-tRNA(Phe) biosynthesis. In terms of biological role, S-adenosyl-L-methionine-dependent transferase that acts as a component of the wybutosine biosynthesis pathway. Wybutosine is a hyper modified guanosine with a tricyclic base found at the 3'-position adjacent to the anticodon of eukaryotic phenylalanine tRNA. Catalyzes the transfer of the alpha-amino-alpha-carboxypropyl (acp) group from S-adenosyl-L-methionine to the C-7 position of 4-demethylwyosine (imG-14) to produce wybutosine-86. The chain is tRNA wybutosine-synthesizing protein 2 homolog (TRMT12) from Bos taurus (Bovine).